The chain runs to 524 residues: Coronin-2A (524 aa).

WD repeat units lie at residues 80–120, 130–170, 178–217, 220–263, and 269–308; these read GHRG…LTRN, GHAR…SVIA, CHQD…VLQE, YKGH…VPLT, and GSSG…PHLT. Residues 403–436 form a disordered region; sequence LLDSQTLPPERPLSNSMVQVSPQPLEPMKQPAED. Residues 404-424 show a composition bias toward polar residues; it reads LDSQTLPPERPLSNSMVQVSP. Positions 484–523 form a coiled coil; it reads QMFYRQQEEIRRLRELLIQREVQTKQLELEIKNLRMALGQ.

The protein belongs to the WD repeat coronin family. As to quaternary structure, binds actin. Component of the N-Cor repressor complex, at least composed of NCOR1, NCOR2, HDAC3, TBL1X, TBL1R, CORO2A and GPS2.

This is Coronin-2A (Coro2a) from Mus musculus (Mouse).